We begin with the raw amino-acid sequence, 1840 residues long: Sodium channel protein type 4 subunit alpha (1840 aa).

Residues Met1–Ala131 lie on the Cytoplasmic side of the membrane. Residues Glu36–Ala60 are compositionally biased toward basic and acidic residues. A disordered region spans residues Glu36–Asn63. An I repeat occupies Leu113–Asn448. A helical transmembrane segment spans residues Leu132 to Met150. At Ser151–Ser157 the chain is on the extracellular side. Residues Lys158–Ala178 form a helical membrane-spanning segment. Residues Arg179 to Pro192 lie on the Cytoplasmic side of the membrane. The helical transmembrane segment at Trp193–Val210 threads the bilayer. Residues Asp211–Ser216 are Extracellular-facing. The chain crosses the membrane as a helical span at residues Ala217 to Ile233. Topologically, residues Pro234–Asp252 are cytoplasmic. Residues Val253–Phe272 traverse the membrane as a helical segment. At Met273–Thr385 the chain is on the extracellular side. A disulfide bond links Cys280 and Cys354. N-linked (GlcNAc...) asparagine glycans are attached at residues Asn288, Asn291, Asn297, Asn303, Asn309, Asn315, Asn327, and Asn356. A disulfide bridge links Cys363 with Cys369. An intramembrane region (pore-forming) is located at residues Phe386–Leu410. At Arg411–Tyr417 the chain is on the extracellular side. The helical transmembrane segment at Met418 to Ala438 threads the bilayer. At Val439–Pro572 the chain is on the cytoplasmic side. The disordered stretch occupies residues Ala481–Ser522. Position 487 is a phosphoserine (Ser487). Residues Cys554–Gly826 form an II repeat. Residues Phe573 to Met591 traverse the membrane as a helical segment. Residues Glu592–Asn602 lie on the Extracellular side of the membrane. The chain crosses the membrane as a helical span at residues Val603 to Lys622. The Cytoplasmic portion of the chain corresponds to Leu623 to Trp636. Residues Asn637–Val656 traverse the membrane as a helical segment. Residues Gln657 to Gly658 are Extracellular-facing. A helical transmembrane segment spans residues Leu659–Ser676. Over Trp677 to Gly692 the chain is Cytoplasmic. The chain crosses the membrane as a helical span at residues Ala693–Val711. Topologically, residues Gly712–Asp740 are extracellular. Residues Cys725 and Cys731 are joined by a disulfide bond. Positions Phe741 to Trp761 form an intramembrane region, pore-forming. The Extracellular portion of the chain corresponds to Asp762–Cys772. A disulfide bridge connects residues Cys763 and Cys772. Residues Leu773–Phe791 form a helical membrane-spanning segment. Topologically, residues Leu792–Trp1025 are cytoplasmic. Disordered regions lie at residues Glu854–Asn884 and Asp925–Pro983. Residues Glu868–Asn884 show a composition bias toward basic and acidic residues. 2 stretches are compositionally biased toward acidic residues: residues Asp925–Pro940 and Glu968–Pro983. One copy of the III repeat lies at Arg1006–Leu1319. Residues Phe1026 to Phe1043 traverse the membrane as a helical segment. Residues Glu1044–Thr1056 are Extracellular-facing. A helical membrane pass occupies residues Ile1057–Leu1075. The Cytoplasmic segment spans residues Lys1076–Ala1089. Residues Trp1090–Asn1108 traverse the membrane as a helical segment. At Trp1109–Gly1116 the chain is on the extracellular side. Residues Pro1117–Arg1135 traverse the membrane as a helical segment. Residues Phe1136–Ser1152 lie on the Cytoplasmic side of the membrane. The chain crosses the membrane as a helical span at residues Ile1153–Val1172. Over Asn1173–Val1223 the chain is Extracellular. N-linked (GlcNAc...) asparagine glycosylation occurs at Asn1198. An intramembrane region (pore-forming) is located at residues Gly1224–Ala1245. The Extracellular segment spans residues Ala1246 to Leu1262. The chain crosses the membrane as a helical span at residues Tyr1263 to Ile1284. Over Gly1285–Val1347 the chain is Cytoplasmic. The interval Ile1303–Met1305 is important for rapid channel inactivation. An IV repeat occupies Ile1328–Gln1626. A helical membrane pass occupies residues Phe1348–Val1365. The Extracellular portion of the chain corresponds to Glu1366 to Asp1376. The chain crosses the membrane as a helical span at residues Ile1377–Leu1395. Residues Lys1396–Ile1407 are Cytoplasmic-facing. Residues Gly1408–Ala1425 form a helical membrane-spanning segment. Over Leu1426 to Thr1438 the chain is Extracellular. A helical transmembrane segment spans residues Leu1439–Ile1455. Topologically, residues Arg1456–Ala1474 are cytoplasmic. The chain crosses the membrane as a helical span at residues Leu1475 to Phe1492. Residues Gly1493–Thr1514 lie on the Extracellular side of the membrane. Residues Phe1515–Pro1537 constitute an intramembrane region (pore-forming). Residues Ile1538–Gly1567 are Extracellular-facing. Cys1546 and Cys1561 are joined by a disulfide. A helical membrane pass occupies residues Ile1568–Ile1590. The Cytoplasmic portion of the chain corresponds to Leu1591–Val1840. The IQ domain maps to Glu1720 to His1749. The segment at His1775–Val1840 is disordered. Residues Pro1804 to Thr1813 are compositionally biased toward low complexity. A compositionally biased stretch (pro residues) spans Pro1814–Ser1824.

Belongs to the sodium channel (TC 1.A.1.10) family. Nav1.4/SCN4A subfamily. In terms of assembly, the Nav1.4 voltage-gated sodium channel consists of an ion-conducting alpha subunit SCN4A which is functional on its own and a regulatory beta subunit SCN1B. SCN1B strongly enhances the presence of SCN4A at the cell surface. SCN1B is also required for rapid channel inactivation and recovery after inactivation. It prevents the decrease of channel activity in response to repetitive, high-frequency depolarizations. Interacts with the syntrophins SNTA1, SNTB1 and SNTB2 (via PDZ domain); probably links SCN4A to the actin cytoskeleton and the extracellular matrix via the dystrophin-associated protein complex and regulates its localization in muscle cells. Interacts with TMEM233; probable regulator of the channel. In terms of tissue distribution, detected in skeletal muscle.

It is found in the cell membrane. The enzyme catalyses Na(+)(in) = Na(+)(out). Its activity is regulated as follows. Potently inhibited by tetrodotoxin and saxitoxin. Inhibited by the conotoxin GVIIJ. Functionally, pore-forming subunit of Nav1.4, a voltage-gated sodium (Nav) channel that directly mediates the depolarizing phase of action potentials in excitable membranes. Navs, also called VGSCs (voltage-gated sodium channels) or VDSCs (voltage-dependent sodium channels), operate by switching between closed and open conformations depending on the voltage difference across the membrane. In the open conformation they allow Na(+) ions to selectively pass through the pore, along their electrochemical gradient. The influx of Na+ ions provokes membrane depolarization, initiating the propagation of electrical signals throughout cells and tissues. Highly expressed in skeletal muscles, Nav1.4 generates the action potential crucial for muscle contraction. In Rattus norvegicus (Rat), this protein is Sodium channel protein type 4 subunit alpha.